Here is a 202-residue protein sequence, read N- to C-terminus: 3-isopropylmalate dehydratase small subunit 1 (202 aa).

Belongs to the LeuD family. LeuD type 1 subfamily. In terms of assembly, heterodimer of LeuC and LeuD.

The catalysed reaction is (2R,3S)-3-isopropylmalate = (2S)-2-isopropylmalate. The protein operates within amino-acid biosynthesis; L-leucine biosynthesis; L-leucine from 3-methyl-2-oxobutanoate: step 2/4. Functionally, catalyzes the isomerization between 2-isopropylmalate and 3-isopropylmalate, via the formation of 2-isopropylmaleate. The polypeptide is 3-isopropylmalate dehydratase small subunit 1 (Bordetella pertussis (strain Tohama I / ATCC BAA-589 / NCTC 13251)).